We begin with the raw amino-acid sequence, 410 residues long: UBX domain-containing protein 3 (410 aa).

Disordered stretches follow at residues 46-139 and 154-212; these read EEDH…PDPK and TISP…EKPL. The span at 65–85 shows a compositional bias: low complexity; it reads GSSSGISGGDQQPPRPLQRQQ. A compositionally biased stretch (polar residues) spans 86–97; sequence NTQGQGMKSGTA. Ser-156, Ser-167, and Ser-186 each carry phosphoserine. The span at 163-174 shows a compositional bias: low complexity; sequence SGPSSLASSWAS. Positions 183–196 are enriched in polar residues; it reads NEASGSTTPVTQSG. Phosphothreonine is present on Thr-190. The region spanning 211 to 276 is the SEP domain; the sequence is PLRRTLYFWR…VQHRMDEDYV (66 aa). Residues 334 to 410 form the UBX domain; it reads ENKPTTRIQV…KNASLVQKSL (77 aa).

Interacts with cdc48.

Its function is as follows. Involved in CDC48-dependent protein degradation through the ubiquitin/proteasome pathway. Involved in delivery of substrates to the 26S proteasome. Also required for membrane fusion and sporulation. The protein is UBX domain-containing protein 3 (ubx3) of Schizosaccharomyces pombe (strain 972 / ATCC 24843) (Fission yeast).